Here is a 247-residue protein sequence, read N- to C-terminus: MSGKDRIEIFPSRMAQTIMKARLKGAQTGRNLLKKKSDALTLRFRQILKKIIETKMLMGEVMREAAFSLAEAKFTAGDFSTTVIQNVNKAQVKIRAKKDNVAGVTLPVFEHYHEGTDSYELTGLARGGEQLAKLKRNYAKAVELLVELASLQTSFVTLDEAIKITNRRVNAIEHVIIPRIERTLAYIITELDEREREEFYRLKKIQEKKKILKEKSEKDLEQRRAAGEVLEPANLLAEEKDEDLLFE.

This sequence belongs to the V-ATPase D subunit family. As to quaternary structure, V-ATPase is a heteromultimeric enzyme made up of two complexes: the ATP-hydrolytic V1 complex and the proton translocation V0 complex. The V1 complex consists of three catalytic AB heterodimers that form a heterohexamer, three peripheral stalks each consisting of EG heterodimers, one central rotor including subunits D and F, and the regulatory subunits C and H. The proton translocation complex V0 consists of the proton transport subunit a, a ring of proteolipid subunits c9c'', rotary subunit d, subunits e and f, and the accessory subunits ATP6AP1/Ac45 and ATP6AP2/PRR. Interacts with SNX10.

It localises to the membrane. The protein localises to the cytoplasmic vesicle. Its subcellular location is the clathrin-coated vesicle membrane. It is found in the cytoplasm. The protein resides in the cytoskeleton. It localises to the microtubule organizing center. The protein localises to the centrosome. Its subcellular location is the cell projection. It is found in the cilium. Subunit of the V1 complex of vacuolar(H+)-ATPase (V-ATPase), a multisubunit enzyme composed of a peripheral complex (V1) that hydrolyzes ATP and a membrane integral complex (V0) that translocates protons. V-ATPase is responsible for acidifying and maintaining the pH of intracellular compartments and in some cell types, is targeted to the plasma membrane, where it is responsible for acidifying the extracellular environment. May play a role in cilium biogenesis through regulation of the transport and the localization of proteins to the cilium. The sequence is that of V-type proton ATPase subunit D (ATP6V1D) from Homo sapiens (Human).